Consider the following 430-residue polypeptide: Asparagine--tRNA ligase (430 aa).

This sequence belongs to the class-II aminoacyl-tRNA synthetase family. Homodimer.

Its subcellular location is the cytoplasm. It carries out the reaction tRNA(Asn) + L-asparagine + ATP = L-asparaginyl-tRNA(Asn) + AMP + diphosphate + H(+). This chain is Asparagine--tRNA ligase, found in Staphylococcus aureus (strain bovine RF122 / ET3-1).